The following is a 710-amino-acid chain: Solute carrier family 15 member 1 (710 aa).

The helical transmembrane segment at 1-21 (MGMSKSRGCFGYPLSIFFIVV) threads the bilayer. Topologically, residues 22-53 (NEFCERFSYYGMRALLVLYFRNFLGWDDDLST) are extracellular. Residues 54–74 (AIYHTFVALCYLTPILGALIA) traverse the membrane as a helical segment. The Cytoplasmic segment spans residues 75 to 82 (DSWLGKFK). A helical transmembrane segment spans residues 83 to 103 (TIVSLSIVYTIGQAVISVSSI). The Extracellular portion of the chain corresponds to 104 to 118 (NDLTDHDHDGSPNNL). A helical membrane pass occupies residues 119-139 (PLHVALSMIGLALIALGTGGI). Topologically, residues 140–161 (KPCVSAFGGDQFEEGQEKQRNR) are cytoplasmic. A helical transmembrane segment spans residues 162–182 (FFSIFYLAINAGSLLSTIITP). Topologically, residues 183–198 (ILRVQQCGIHSQQACY) are extracellular. The helical transmembrane segment at 199-219 (PLAFGVPAALMAVALIVFVLG) threads the bilayer. At 220–276 (SGMYKKFQPQGNIMGKVAKCIRFAIKNRFRHRSKAFPKRNHWLDWAKEKYDERLISQ) the chain is on the cytoplasmic side. The helical transmembrane segment at 277-297 (IKIMTKVMFLYIPLPMFWALF) threads the bilayer. The Extracellular portion of the chain corresponds to 298-327 (DQQGSRWTLQATTMTGKIGTIEIQPDQMQT). A helical membrane pass occupies residues 328-348 (VNAILIVIMVPIVDAVVYPLI). Residues 349–361 (AKCGFNFTSLKKM) lie on the Cytoplasmic side of the membrane. A helical transmembrane segment spans residues 362–382 (TVGMFLASMAFVVAAIVQVEI). At 383–586 (DKTLPVFPSG…PPNTVNMALQ (204 aa)) the chain is on the extracellular side. The extracellular domain (ECD) stretch occupies residues 383-586 (DKTLPVFPSG…PPNTVNMALQ (204 aa)). N415, N439, N510, N532, and N539 each carry an N-linked (GlcNAc...) asparagine glycan. A helical membrane pass occupies residues 587–607 (IPQYFLLTCGEVVFSVTGLEF). At 608–621 (SYSQAPSNMKSVLQ) the chain is on the cytoplasmic side. The helical transmembrane segment at 622–642 (AGWLLTVAIGNIIVLIVAEAG) threads the bilayer. Over 643 to 647 (HFDKQ) the chain is Extracellular. Residues 648–668 (WAEYVLFASLLLVVCIIFAIM) form a helical membrane-spanning segment. The Cytoplasmic segment spans residues 669 to 710 (ARFYTYINPAEIEAQFDEDEKKKGVGKENPYSSLEPVSQTNM). The tract at residues 687–710 (DEKKKGVGKENPYSSLEPVSQTNM) is disordered. A compositionally biased stretch (polar residues) spans 698–710 (PYSSLEPVSQTNM).

The protein belongs to the major facilitator superfamily. Proton-dependent oligopeptide transporter (POT/PTR) (TC 2.A.17) family. In terms of assembly, interacts (via extracellular domain region) with trypsin. In terms of tissue distribution, highly expressed in small intestine. As to expression, expression is restricted to pinealocytes.

The protein resides in the apical cell membrane. It catalyses the reaction a dipeptide(out) + H(+)(out) = a dipeptide(in) + H(+)(in). The enzyme catalyses an L-amino acid tripeptide(out) + H(+)(out) = an L-amino acid tripeptide(in) + H(+)(in). It carries out the reaction L-alanyl-L-lysine(out) + H(+)(out) = L-alanyl-L-lysine(in) + H(+)(in). The catalysed reaction is L-alanyl-L-proline(out) + H(+)(out) = L-alanyl-L-proline(in) + H(+)(in). It catalyses the reaction L-alanyl-L-valine(out) + H(+)(out) = L-alanyl-L-valine(in) + H(+)(in). The enzyme catalyses carnosine(out) + H(+)(out) = carnosine(in) + H(+)(in). It carries out the reaction glycyl-L-glutamine(out) + H(+)(out) = glycyl-L-glutamine(in) + H(+)(in). The catalysed reaction is glycyl-L-leucine(out) + H(+)(out) = glycyl-L-leucine(in) + H(+)(in). It catalyses the reaction glycyl-L-proline(out) + H(+)(out) = glycyl-L-proline(in) + H(+)(in). The enzyme catalyses glycyl-sarcosine(out) + H(+)(out) = glycyl-sarcosine(in) + H(+)(in). It carries out the reaction L-leucyl-L-leucine(out) + H(+)(out) = L-leucyl-L-leucine(in) + H(+)(in). The catalysed reaction is L-leucyl-L-proline(out) + H(+)(out) = L-leucyl-L-proline(in) + H(+)(in). It catalyses the reaction L-phenylalanyl-L-leucine(out) + H(+)(out) = L-phenylalanyl-L-leucine(in) + H(+)(in). The enzyme catalyses L-phenylalanyl-L-phenylalanine(out) + H(+)(out) = L-phenylalanyl-L-phenylalanine(in) + H(+)(in). It carries out the reaction L-lysyl-glycine(out) + H(+)(out) = L-lysyl-glycine(in) + H(+)(in). The catalysed reaction is L-tyrosylglycine(out) + H(+)(out) = L-tyrosylglycine(in) + H(+)(in). It catalyses the reaction L-alanyl-L-aspartate(out) + 2 H(+)(out) = L-alanyl-L-aspartate(in) + 2 H(+)(in). The enzyme catalyses L-aspartyl-glycine(out) + 2 H(+)(out) = L-aspartyl-glycine(in) + 2 H(+)(in). It carries out the reaction glycyl-L-aspartate(out) + 2 H(+)(out) = glycyl-L-aspartate(in) + 2 H(+)(in). The catalysed reaction is glycyl-L-glutamate(out) + 2 H(+)(out) = glycyl-L-glutamate(in) + 2 H(+)(in). It catalyses the reaction L-alanyl-L-leucyl-L-alanine(out) + H(+)(out) = L-alanyl-L-leucyl-L-alanine(in) + H(+)(in). The enzyme catalyses L-alanyl-L-prolylglycine(out) + H(+)(out) = L-alanyl-L-prolylglycine(in) + H(+)(in). It carries out the reaction glycylglycyl-L-isoleucine(out) + H(+)(out) = glycylglycyl-L-isoleucine(in) + H(+)(in). The catalysed reaction is glycylglycyl-L-proline(out) + H(+)(out) = glycylglycyl-L-proline(in) + H(+)(in). It catalyses the reaction L-methionyl-L-phenylalanyl-L-methionine(out) + H(+)(out) = L-methionyl-L-phenylalanyl-L-methionine(in) + H(+)(in). The enzyme catalyses N-acetyl-D-muramoyl-L-alanyl-D-isoglutamine(out) + 2 H(+)(out) = N-acetyl-D-muramoyl-L-alanyl-D-isoglutamine(in) + 2 H(+)(in). It carries out the reaction N(alpha)-formyl-L-methionyl-L-leucyl-L-phenylalanine(out) + 2 H(+)(out) = N(alpha)-formyl-L-methionyl-L-leucyl-L-phenylalanine(in) + 2 H(+)(in). Its function is as follows. Electrogenic proton-coupled amino-acid transporter that transports oligopeptides of 2 to 4 amino acids with a preference for dipeptides. Transports neutral and monovalently charged peptides with a proton to peptide stoichiometry of 1:1 or 2:1. Primarily responsible for the absorption of dietary di- and tripeptides from the small intestinal lumen. Mediates transepithelial transport of muramyl and N-formylated bacterial dipeptides contributing to recognition of pathogenic bacteria by the mucosal immune system. This Rattus norvegicus (Rat) protein is Solute carrier family 15 member 1 (Slc15a1).